The chain runs to 772 residues: 1,4-alpha-glucan branching enzyme GlgB (772 aa).

Asp-431 acts as the Nucleophile in catalysis. The active-site Proton donor is the Glu-484.

The protein belongs to the glycosyl hydrolase 13 family. GlgB subfamily. Monomer.

The catalysed reaction is Transfers a segment of a (1-&gt;4)-alpha-D-glucan chain to a primary hydroxy group in a similar glucan chain.. It participates in glycan biosynthesis; glycogen biosynthesis. Its function is as follows. Catalyzes the formation of the alpha-1,6-glucosidic linkages in glycogen by scission of a 1,4-alpha-linked oligosaccharide from growing alpha-1,4-glucan chains and the subsequent attachment of the oligosaccharide to the alpha-1,6 position. The protein is 1,4-alpha-glucan branching enzyme GlgB of Synechococcus sp. (strain RCC307).